We begin with the raw amino-acid sequence, 258 residues long: Synapse differentiation-inducing gene protein 1 (258 aa).

Topologically, residues 1-181 (MDGIIEQKSM…NFLMMPPRDH (181 aa)) are cytoplasmic. Serine 137 is subject to Phosphoserine. The helical transmembrane segment at 182–202 (LGLSVFSMLCCFWPLGIAAFY) threads the bilayer. Residues 203–228 (LSHETNKAVAKGDLHQASTSSRRALF) lie on the Extracellular side of the membrane. Residues 229 to 249 (LAVLSITIGTGVYVGVAVALI) constitute an intramembrane region (helical). The Extracellular segment spans residues 250–258 (AYLSKNNHL).

Belongs to the CD225/Dispanin family. Homodimer. Interacts with GRIA1 and GRIA2.

The protein resides in the cell membrane. It localises to the early endosome membrane. The protein localises to the postsynaptic density membrane. It is found in the synapse. Its subcellular location is the cell projection. The protein resides in the dendrite. It localises to the dendritic spine. May regulate AMPA receptor content at nascent synapses, and have a role in postsynaptic development and maturation. The chain is Synapse differentiation-inducing gene protein 1 (SYNDIG1) from Homo sapiens (Human).